The chain runs to 638 residues: ATP-dependent zinc metalloprotease FtsH (638 aa).

The Cytoplasmic portion of the chain corresponds to 1–11 (MSQKGKNKKWR). A helical transmembrane segment spans residues 12 to 32 (SAGLYALLAIVLISLATTFLG). The Lumenal portion of the chain corresponds to 33–114 (NRPPERLEIS…LAVRPVQEEG (82 aa)). Residues 115 to 135 (LLGRILSTFFLPVLLLLGLFF) form a helical membrane-spanning segment. The Cytoplasmic portion of the chain corresponds to 136-638 (LLRRAQNGPG…TLPMAVNAGA (503 aa)). 209 to 216 (GPPGTGKT) contacts ATP. H431 contacts Zn(2+). E432 is an active-site residue. H435 and D510 together coordinate Zn(2+).

It in the central section; belongs to the AAA ATPase family. This sequence in the C-terminal section; belongs to the peptidase M41 family. Homohexamer. Zn(2+) is required as a cofactor.

The protein localises to the cellular thylakoid membrane. Its function is as follows. Acts as a processive, ATP-dependent zinc metallopeptidase for both cytoplasmic and membrane proteins. Plays a role in the quality control of integral membrane proteins. In Synechococcus sp. (strain JA-2-3B'a(2-13)) (Cyanobacteria bacterium Yellowstone B-Prime), this protein is ATP-dependent zinc metalloprotease FtsH.